The sequence spans 215 residues: Small ribosomal subunit protein bS6 (215 aa).

Disordered stretches follow at residues 121 to 153 (RENN…QKPK) and 187 to 215 (NQRQ…KDKQ). Over residues 144–153 (SRTEKAQKPK) the composition is skewed to basic and acidic residues. Low complexity predominate over residues 188-198 (QRQNQQNNNNN). A compositionally biased stretch (basic and acidic residues) spans 199–215 (RFDRNRNRQHNRFKDKQ).

Belongs to the bacterial ribosomal protein bS6 family.

Functionally, binds together with bS18 to 16S ribosomal RNA. This Mycoplasma pneumoniae (strain ATCC 29342 / M129 / Subtype 1) (Mycoplasmoides pneumoniae) protein is Small ribosomal subunit protein bS6 (rpsF).